The primary structure comprises 437 residues: Adenylosuccinate synthetase (437 aa).

Residues 12–18 (GDEGKGK) and 40–42 (GHT) each bind GTP. D13 functions as the Proton acceptor in the catalytic mechanism. Mg(2+) contacts are provided by D13 and G40. Residues 13-16 (DEGK), 38-41 (NAGH), T131, R145, Q225, and T240 contribute to the IMP site. H41 acts as the Proton donor in catalysis. Positions 281–304 (TELLGADGKPDADGERLGTRGHEF) are disordered. A compositionally biased stretch (basic and acidic residues) spans 288–303 (GKPDADGERLGTRGHE). 306–312 (TTTGRQR) is a binding site for substrate. R310 lines the IMP pocket. GTP is bound by residues R312, 338–340 (KLD), and 420–422 (STS).

Belongs to the adenylosuccinate synthetase family. In terms of assembly, homodimer. It depends on Mg(2+) as a cofactor.

The protein localises to the cytoplasm. It carries out the reaction IMP + L-aspartate + GTP = N(6)-(1,2-dicarboxyethyl)-AMP + GDP + phosphate + 2 H(+). It participates in purine metabolism; AMP biosynthesis via de novo pathway; AMP from IMP: step 1/2. Plays an important role in the de novo pathway of purine nucleotide biosynthesis. Catalyzes the first committed step in the biosynthesis of AMP from IMP. This is Adenylosuccinate synthetase from Ruegeria sp. (strain TM1040) (Silicibacter sp.).